The chain runs to 484 residues: Glycogen synthase (484 aa).

Lysine 15 is an ADP-alpha-D-glucose binding site.

This sequence belongs to the glycosyltransferase 1 family. Bacterial/plant glycogen synthase subfamily.

It catalyses the reaction [(1-&gt;4)-alpha-D-glucosyl](n) + ADP-alpha-D-glucose = [(1-&gt;4)-alpha-D-glucosyl](n+1) + ADP + H(+). It participates in glycan biosynthesis; glycogen biosynthesis. Synthesizes alpha-1,4-glucan chains using ADP-glucose. The sequence is that of Glycogen synthase from Geotalea daltonii (strain DSM 22248 / JCM 15807 / FRC-32) (Geobacter daltonii).